A 162-amino-acid polypeptide reads, in one-letter code: SsrA-binding protein (162 aa).

Positions 137 to 154 (HDKREDTKAREWDREKAR) are enriched in basic and acidic residues. A disordered region spans residues 137-162 (HDKREDTKAREWDREKARIMKNKHRG).

It belongs to the SmpB family.

It is found in the cytoplasm. In terms of biological role, required for rescue of stalled ribosomes mediated by trans-translation. Binds to transfer-messenger RNA (tmRNA), required for stable association of tmRNA with ribosomes. tmRNA and SmpB together mimic tRNA shape, replacing the anticodon stem-loop with SmpB. tmRNA is encoded by the ssrA gene; the 2 termini fold to resemble tRNA(Ala) and it encodes a 'tag peptide', a short internal open reading frame. During trans-translation Ala-aminoacylated tmRNA acts like a tRNA, entering the A-site of stalled ribosomes, displacing the stalled mRNA. The ribosome then switches to translate the ORF on the tmRNA; the nascent peptide is terminated with the 'tag peptide' encoded by the tmRNA and targeted for degradation. The ribosome is freed to recommence translation, which seems to be the essential function of trans-translation. The polypeptide is SsrA-binding protein (Aeromonas salmonicida (strain A449)).